We begin with the raw amino-acid sequence, 281 residues long: sn-glycerol-3-phosphate transport system permease protein UgpE (281 aa).

6 helical membrane passes run 16-36 (LILG…AATL), 85-105 (FSIT…IVWF), 113-133 (FFWM…FPTV), 142-162 (LDSY…TFLF), 202-222 (ALFV…LLII), and 247-267 (WNSV…IVLV). The ABC transmembrane type-1 domain occupies 77–268 (LLNSFVMAFS…IPPVVIVLVM (192 aa)).

It belongs to the binding-protein-dependent transport system permease family. UgpAE subfamily. In terms of assembly, the complex is composed of two ATP-binding proteins (UgpC), two transmembrane proteins (UgpA and UgpE) and a solute-binding protein (UgpB).

The protein resides in the cell inner membrane. In terms of biological role, part of the ABC transporter complex UgpBAEC involved in sn-glycerol-3-phosphate (G3P) import. Probably responsible for the translocation of the substrate across the membrane. Can also transport glycerophosphoryl diesters, which are hydrolyzed to G3P and alcohol during transport. The G3P moiety can be detected in the cytoplasm whereas the corresponding alcohol is usually found in the culture medium. It was proposed by Yang et al that the complex could also transport glycerol-2-phosphate (G2P) in vivo, but it was shown later by Wuttge et al that UgpB does not bind G2P, questioning this transport activity. G2P might be converted in the periplasm to G3P before its transport. This is sn-glycerol-3-phosphate transport system permease protein UgpE from Escherichia coli (strain K12).